A 650-amino-acid polypeptide reads, in one-letter code: ATP-dependent zinc metalloprotease FtsH (650 aa).

The Cytoplasmic portion of the chain corresponds to 1–10; the sequence is MKTKKSKSTL. The chain crosses the membrane as a helical span at residues 11–31; it reads WFWLIILLAIIVTIIIIAVTV. The Extracellular segment spans residues 32 to 123; the sequence is KGTTQVISDA…LVYQGSVGMA (92 aa). Residues 124–144 traverse the membrane as a helical segment; that stretch reads LLVSLAPLLIYVLLFGGIIWF. At 145–650 the chain is on the cytoplasmic side; that stretch reads MMKSSSGAGA…DIKVEDLDID (506 aa). An ATP-binding site is contributed by 217–224; the sequence is GPPGTGKT. H437 is a binding site for Zn(2+). E438 is an active-site residue. Residues H441 and D515 each coordinate Zn(2+).

In the central section; belongs to the AAA ATPase family. It in the C-terminal section; belongs to the peptidase M41 family. As to quaternary structure, homohexamer. Zn(2+) serves as cofactor.

The protein localises to the cell membrane. Functionally, acts as a processive, ATP-dependent zinc metallopeptidase for both cytoplasmic and membrane proteins. Plays a role in the quality control of integral membrane proteins. This is ATP-dependent zinc metalloprotease FtsH from Mesoplasma florum (strain ATCC 33453 / NBRC 100688 / NCTC 11704 / L1) (Acholeplasma florum).